A 125-amino-acid polypeptide reads, in one-letter code: Holo-[acyl-carrier-protein] synthase (125 aa).

Residues D8 and E57 each contribute to the Mg(2+) site.

It belongs to the P-Pant transferase superfamily. AcpS family. It depends on Mg(2+) as a cofactor.

It is found in the cytoplasm. It carries out the reaction apo-[ACP] + CoA = holo-[ACP] + adenosine 3',5'-bisphosphate + H(+). Functionally, transfers the 4'-phosphopantetheine moiety from coenzyme A to a Ser of acyl-carrier-protein. The sequence is that of Holo-[acyl-carrier-protein] synthase from Geobacter sp. (strain M21).